A 361-amino-acid polypeptide reads, in one-letter code: Phosphoserine aminotransferase (361 aa).

L-glutamate is bound at residue Arg42. Residues 76 to 77 (AR), Trp102, Thr153, Asp173, and Gln196 each bind pyridoxal 5'-phosphate. Lys197 is subject to N6-(pyridoxal phosphate)lysine. A pyridoxal 5'-phosphate-binding site is contributed by 238–239 (NT).

This sequence belongs to the class-V pyridoxal-phosphate-dependent aminotransferase family. SerC subfamily. Homodimer. Pyridoxal 5'-phosphate serves as cofactor.

It localises to the cytoplasm. It catalyses the reaction O-phospho-L-serine + 2-oxoglutarate = 3-phosphooxypyruvate + L-glutamate. It carries out the reaction 4-(phosphooxy)-L-threonine + 2-oxoglutarate = (R)-3-hydroxy-2-oxo-4-phosphooxybutanoate + L-glutamate. Its pathway is amino-acid biosynthesis; L-serine biosynthesis; L-serine from 3-phospho-D-glycerate: step 2/3. It participates in cofactor biosynthesis; pyridoxine 5'-phosphate biosynthesis; pyridoxine 5'-phosphate from D-erythrose 4-phosphate: step 3/5. In terms of biological role, catalyzes the reversible conversion of 3-phosphohydroxypyruvate to phosphoserine and of 3-hydroxy-2-oxo-4-phosphonooxybutanoate to phosphohydroxythreonine. This chain is Phosphoserine aminotransferase, found in Mannheimia succiniciproducens (strain KCTC 0769BP / MBEL55E).